The sequence spans 105 residues: Large ribosomal subunit protein uL24 (105 aa).

This sequence belongs to the universal ribosomal protein uL24 family. As to quaternary structure, part of the 50S ribosomal subunit.

In terms of biological role, one of two assembly initiator proteins, it binds directly to the 5'-end of the 23S rRNA, where it nucleates assembly of the 50S subunit. Functionally, one of the proteins that surrounds the polypeptide exit tunnel on the outside of the subunit. In Methylococcus capsulatus (strain ATCC 33009 / NCIMB 11132 / Bath), this protein is Large ribosomal subunit protein uL24.